Here is a 132-residue protein sequence, read N- to C-terminus: D-ribose pyranase (132 aa).

Histidine 20 functions as the Proton donor in the catalytic mechanism. Substrate is bound by residues aspartate 28, histidine 99, and 121–123 (YSN).

This sequence belongs to the RbsD / FucU family. RbsD subfamily. As to quaternary structure, homodecamer.

The protein resides in the cytoplasm. The enzyme catalyses beta-D-ribopyranose = beta-D-ribofuranose. The protein operates within carbohydrate metabolism; D-ribose degradation; D-ribose 5-phosphate from beta-D-ribopyranose: step 1/2. In terms of biological role, catalyzes the interconversion of beta-pyran and beta-furan forms of D-ribose. The polypeptide is D-ribose pyranase (Streptococcus agalactiae serotype III (strain NEM316)).